The chain runs to 224 residues: 7-cyano-7-deazaguanine synthase (224 aa).

10–20 (LSGGLDSATVV) contributes to the ATP binding site. Zn(2+) is bound by residues Cys-189, Cys-199, Cys-202, and Cys-205.

The protein belongs to the QueC family. Zn(2+) is required as a cofactor.

It carries out the reaction 7-carboxy-7-deazaguanine + NH4(+) + ATP = 7-cyano-7-deazaguanine + ADP + phosphate + H2O + H(+). It functions in the pathway purine metabolism; 7-cyano-7-deazaguanine biosynthesis. Functionally, catalyzes the ATP-dependent conversion of 7-carboxy-7-deazaguanine (CDG) to 7-cyano-7-deazaguanine (preQ(0)). The protein is 7-cyano-7-deazaguanine synthase of Pseudomonas putida (strain W619).